The chain runs to 520 residues: Ribonuclease Y (520 aa).

The chain crosses the membrane as a helical span at residues 1–21 (MEILIIVIAAVVGLALGFAIA). A KH domain is found at 210-295 (CVSVFNLESD…EVVKKTRKQI (86 aa)). Residues 336-429 (LLQHSREVAK…VQVCDAISGA (94 aa)) enclose the HD domain.

Belongs to the RNase Y family.

The protein resides in the cell membrane. In terms of biological role, endoribonuclease that initiates mRNA decay. The sequence is that of Ribonuclease Y from Christiangramia forsetii (strain DSM 17595 / CGMCC 1.15422 / KT0803) (Gramella forsetii).